The chain runs to 62 residues: MARGNQRELARQKNMKKSQEISKGKRKEDSLTTSQRKQRDSEIMQQKQKAANERKSMQTREK.

Composition is skewed to basic and acidic residues over residues 1–30 and 50–62; these read MARG…KEDS and AANE…TREK. The tract at residues 1 to 62 is disordered; it reads MARGNQRELA…ERKSMQTREK (62 aa).

The protein belongs to the SERF family. Interacts with SNCA; this interaction promotes the aggregation of SNCA.

Its subcellular location is the cytoplasm. The protein localises to the cytosol. It localises to the nucleus. Positive regulator of amyloid protein aggregation and proteotoxicity. Induces conformational changes in amyloid proteins, such as APP, HTT, and SNCA, driving them into compact formations preceding the formation of aggregates. In Bos taurus (Bovine), this protein is Small EDRK-rich factor 1 (SERF1).